The sequence spans 171 residues: Translationally-controlled tumor protein homolog (171 aa).

The region spanning 1–171 (MIIYKDIITG…FKDGLEIEKC (171 aa)) is the TCTP domain.

It belongs to the TCTP family.

It is found in the cytoplasm. In terms of biological role, involved in calcium binding and microtubule stabilization. The polypeptide is Translationally-controlled tumor protein homolog (tpt1) (Labeo rohita (Indian major carp)).